Consider the following 234-residue polypeptide: Uridylate kinase (234 aa).

Position 9 to 12 (9 to 12 (KLSG)) interacts with ATP. A UMP-binding site is contributed by glycine 51. ATP contacts are provided by glycine 52 and arginine 56. UMP-binding positions include aspartate 71 and 132 to 139 (CGNPFFTT). Threonine 159, tyrosine 165, and aspartate 168 together coordinate ATP.

The protein belongs to the UMP kinase family. As to quaternary structure, homohexamer.

Its subcellular location is the cytoplasm. It catalyses the reaction UMP + ATP = UDP + ADP. Its pathway is pyrimidine metabolism; CTP biosynthesis via de novo pathway; UDP from UMP (UMPK route): step 1/1. Inhibited by UTP. Its function is as follows. Catalyzes the reversible phosphorylation of UMP to UDP. The polypeptide is Uridylate kinase (Prochlorococcus marinus subsp. pastoris (strain CCMP1986 / NIES-2087 / MED4)).